A 486-amino-acid polypeptide reads, in one-letter code: Monocarboxylate transporter 12 (486 aa).

Residues 1–9 are Cytoplasmic-facing; that stretch reads MTKITRVSL. A run of 12 helical transmembrane segments spans residues 10–30, 58–78, 86–106, 115–135, 148–168, 177–197, 253–273, 289–309, 320–340, 353–373, 383–403, and 410–430; these read ASPPDGGWGWMIVAGCFLVTI, AWIHSIVDCMTMLCAPLGSVV, AGIMLGGLLASTGFILGSFAT, LGVLTGLGFALCYSPAIAMVG, IAMSGSGIGTFILAPVVQLLI, LLILGGFVLNLCVCGALMRPI, FVVLAVSVLFMAYGCSPLFVY, AFLMSILGVIDIVGNITFGWL, YVCYLFAVALDGLCYLCLPML, FGYFDGAYVTLIPVVTAEIVG, VVYFLHAVPYLVSPPIAGWLV, and TAAFLLCGFAMIFSSILLGFV. Over 431-486 the chain is Cytoplasmic; it reads RIVKRMKRTQVPFPVKDSDPKLQLWTNGSVAYSVARELDQKDEEPLPKARSGCNLT.

The protein belongs to the major facilitator superfamily. Monocarboxylate porter (TC 2.A.1.13) family. As to quaternary structure, interacts with isoform 2 of BSG; this interaction is required for its localization to the plasma membrane. As to expression, highly expressed in the lung, liver, kidney, and pancreas. Expressed in eye lens.

The protein localises to the cell membrane. It is found in the basolateral cell membrane. The catalysed reaction is creatine(in) = creatine(out). It catalyses the reaction guanidinoacetate(in) = guanidinoacetate(out). Its activity is regulated as follows. Creatine uptake is inhibited by carbonyl cyanide 3-chlorophenylhydrazone (CCCP) and by valinomycin. Functionally, functions as a transporter for creatine and as well for its precursor guanidinoacetate. Transport of creatine and GAA is independent of resting membrane potential and extracellular Na(+), Cl(-), or pH. Contributes to the process of creatine biosynthesis and distribution. The polypeptide is Monocarboxylate transporter 12 (Mus musculus (Mouse)).